The following is a 595-amino-acid chain: Aspartate--tRNA(Asp/Asn) ligase (595 aa).

E171 is an L-aspartate binding site. The segment at 195-198 is aspartate; it reads QLFK. Residue R217 coordinates L-aspartate. ATP contacts are provided by residues 217–219 and Q226; that span reads RDE. H454 is a binding site for L-aspartate. E488 contributes to the ATP binding site. Residue R495 coordinates L-aspartate. 540–543 contacts ATP; that stretch reads GLDR.

It belongs to the class-II aminoacyl-tRNA synthetase family. Type 1 subfamily. Homodimer.

The protein resides in the cytoplasm. The catalysed reaction is tRNA(Asx) + L-aspartate + ATP = L-aspartyl-tRNA(Asx) + AMP + diphosphate. In terms of biological role, aspartyl-tRNA synthetase with relaxed tRNA specificity since it is able to aspartylate not only its cognate tRNA(Asp) but also tRNA(Asn). Reaction proceeds in two steps: L-aspartate is first activated by ATP to form Asp-AMP and then transferred to the acceptor end of tRNA(Asp/Asn). The chain is Aspartate--tRNA(Asp/Asn) ligase from Bordetella petrii (strain ATCC BAA-461 / DSM 12804 / CCUG 43448).